The following is a 118-amino-acid chain: Class I hydrophobin hum2 (118 aa).

An N-terminal signal peptide occupies residues 1–19 (MQFKTIFATLAAFAAVASA). 4 cysteine pairs are disulfide-bonded: Cys-33-Cys-98, Cys-40-Cys-92, Cys-41-Cys-74, and Cys-99-Cys-112.

This sequence belongs to the fungal hydrophobin family. In terms of assembly, self-assembles to form functional amyloid fibrils called rodlets. Self-assembly into fibrillar rodlets occurs spontaneously at hydrophobic:hydrophilic interfaces and the rodlets further associate laterally to form amphipathic monolayers.

Its subcellular location is the secreted. The protein localises to the cell wall. Its function is as follows. Aerial growth, conidiation, and dispersal of filamentous fungi in the environment rely upon a capability of their secreting small amphipathic proteins called hydrophobins (HPBs) with low sequence identity. Class I can self-assemble into an outermost layer of rodlet bundles on aerial cell surfaces, conferring cellular hydrophobicity that supports fungal growth, development and dispersal; whereas Class II form highly ordered films at water-air interfaces through intermolecular interactions but contribute nothing to the rodlet structure. Hum2 is a class I hydrophobin which that plays a role in, but seems not to be crucial for the formation of aerial hyphae. Hydrophobins of Mycosarcoma maydis have been functionally replaced, at least partially, by repellents. This chain is Class I hydrophobin hum2, found in Mycosarcoma maydis (Corn smut fungus).